We begin with the raw amino-acid sequence, 300 residues long: Ribosomal protein L11 methyltransferase (300 aa).

4 residues coordinate S-adenosyl-L-methionine: threonine 152, glycine 173, aspartate 195, and asparagine 234.

Belongs to the methyltransferase superfamily. PrmA family.

The protein localises to the cytoplasm. It catalyses the reaction L-lysyl-[protein] + 3 S-adenosyl-L-methionine = N(6),N(6),N(6)-trimethyl-L-lysyl-[protein] + 3 S-adenosyl-L-homocysteine + 3 H(+). Its function is as follows. Methylates ribosomal protein L11. This Burkholderia pseudomallei (strain K96243) protein is Ribosomal protein L11 methyltransferase.